The chain runs to 702 residues: Ribosomal RNA large subunit methyltransferase K/L (702 aa).

Residues 43 to 154 (LIYQSLMWSR…KETASIALDL (112 aa)) enclose the THUMP domain.

It belongs to the methyltransferase superfamily. RlmKL family.

It localises to the cytoplasm. The catalysed reaction is guanosine(2445) in 23S rRNA + S-adenosyl-L-methionine = N(2)-methylguanosine(2445) in 23S rRNA + S-adenosyl-L-homocysteine + H(+). The enzyme catalyses guanosine(2069) in 23S rRNA + S-adenosyl-L-methionine = N(2)-methylguanosine(2069) in 23S rRNA + S-adenosyl-L-homocysteine + H(+). Functionally, specifically methylates the guanine in position 2445 (m2G2445) and the guanine in position 2069 (m7G2069) of 23S rRNA. The chain is Ribosomal RNA large subunit methyltransferase K/L from Salmonella choleraesuis (strain SC-B67).